Reading from the N-terminus, the 407-residue chain is Tryptophan synthase beta chain (407 aa).

Lys-91 bears the N6-(pyridoxal phosphate)lysine mark.

The protein belongs to the TrpB family. In terms of assembly, tetramer of two alpha and two beta chains. Pyridoxal 5'-phosphate serves as cofactor.

It catalyses the reaction (1S,2R)-1-C-(indol-3-yl)glycerol 3-phosphate + L-serine = D-glyceraldehyde 3-phosphate + L-tryptophan + H2O. The protein operates within amino-acid biosynthesis; L-tryptophan biosynthesis; L-tryptophan from chorismate: step 5/5. The beta subunit is responsible for the synthesis of L-tryptophan from indole and L-serine. The polypeptide is Tryptophan synthase beta chain (Streptococcus pneumoniae (strain 70585)).